Here is a 165-residue protein sequence, read N- to C-terminus: Ribonuclease H2 subunit C (165 aa).

An N-acetylmethionine modification is found at Met1.

It belongs to the RNase H2 subunit C family. In terms of assembly, the RNase H2 complex is a heterotrimer composed of the catalytic subunit RNASEH2A and the non-catalytic subunits RNASEH2B and RNASEH2C.

It is found in the nucleus. Functionally, non catalytic subunit of RNase H2, an endonuclease that specifically degrades the RNA of RNA:DNA hybrids. Participates in DNA replication, possibly by mediating the removal of lagging-strand Okazaki fragment RNA primers during DNA replication. Mediates the excision of single ribonucleotides from DNA:RNA duplexes. This is Ribonuclease H2 subunit C (RNASEH2C) from Bos taurus (Bovine).